Reading from the N-terminus, the 357-residue chain is Probable cinnamyl alcohol dehydrogenase (357 aa).

Cys47 serves as a coordination point for Zn(2+). Thr49 is a binding site for NADP(+). Residues His69, Glu70, Cys100, Cys103, Cys106, Cys114, and Cys163 each contribute to the Zn(2+) site. NADP(+) contacts are provided by residues Thr167, 188–193 (GLGGVG), 211–216 (SSSDKK), Thr251, Gly275, and 298–300 (SFI).

It belongs to the zinc-containing alcohol dehydrogenase family. As to quaternary structure, homodimer. It depends on Zn(2+) as a cofactor.

It catalyses the reaction (E)-cinnamyl alcohol + NADP(+) = (E)-cinnamaldehyde + NADPH + H(+). It carries out the reaction (E)-coniferol + NADP(+) = (E)-coniferaldehyde + NADPH + H(+). The catalysed reaction is (E)-sinapyl alcohol + NADP(+) = (E)-sinapaldehyde + NADPH + H(+). The enzyme catalyses (E)-4-coumaroyl alcohol + NADP(+) = (E)-4-coumaraldehyde + NADPH + H(+). It catalyses the reaction (E)-caffeyl alcohol + NADP(+) = (E)-caffeyl aldehyde + NADPH + H(+). The protein operates within aromatic compound metabolism; phenylpropanoid biosynthesis. Involved in lignin biosynthesis. Catalyzes the final step specific for the production of lignin monomers. Catalyzes the NADPH-dependent reduction of coniferaldehyde, 5-hydroxyconiferaldehyde, sinapaldehyde, 4-coumaraldehyde and caffeyl aldehyde to their respective alcohols. This chain is Probable cinnamyl alcohol dehydrogenase, found in Populus deltoides (Eastern poplar).